The primary structure comprises 424 residues: Histidine--tRNA ligase (424 aa).

This sequence belongs to the class-II aminoacyl-tRNA synthetase family. As to quaternary structure, homodimer.

Its subcellular location is the cytoplasm. The catalysed reaction is tRNA(His) + L-histidine + ATP = L-histidyl-tRNA(His) + AMP + diphosphate + H(+). This is Histidine--tRNA ligase from Shewanella halifaxensis (strain HAW-EB4).